The primary structure comprises 369 residues: Putative F-box/kelch-repeat protein At4g39760 (369 aa).

Residues 14-60 (SLSFSSLPHEIVVSCLARVSGSYYPKLCLVSKQFRSIILSNEIYKAR) form the F-box domain. Kelch repeat units follow at residues 131–177 (ETYI…GQYP), 178–224 (NIYV…KMKM), and 228–274 (NVYV…KNCW).

This chain is Putative F-box/kelch-repeat protein At4g39760, found in Arabidopsis thaliana (Mouse-ear cress).